The primary structure comprises 93 residues: UPF0058 protein AF_0738 (93 aa).

It belongs to the UPF0058 family.

The polypeptide is UPF0058 protein AF_0738 (Archaeoglobus fulgidus (strain ATCC 49558 / DSM 4304 / JCM 9628 / NBRC 100126 / VC-16)).